We begin with the raw amino-acid sequence, 162 residues long: Interleukin-15 (162 aa).

The N-terminal stretch at 1–29 (MRISKPYLRSTSIQCYLCLLLNSHFLAEA) is a signal peptide. Residues 30-48 (GIHVFIFGCISAGLPKTEA) constitute a propeptide that is removed on maturation. 2 disulfide bridges follow: Cys-83–Cys-133 and Cys-90–Cys-136. 4 N-linked (GlcNAc...) asparagine glycosylation sites follow: Asn-108, Asn-119, Asn-127, and Asn-143.

Belongs to the IL-15/IL-21 family. In terms of tissue distribution, expressed in many tissues including heart, spleen, lung, liver, muscle and kidney (at mRNA level). Expressed in many tissues including heart, spleen, lung, liver, muscle and kidney (at protein level).

It localises to the secreted. In terms of biological role, cytokine that plays a major role in the development of inflammatory and protective immune responses to microbial invaders and parasites by modulating immune cells of both the innate and adaptive immune systems. Stimulates the proliferation of natural killer cells, T-cells and B-cells and promotes the secretion of several cytokines. In monocytes, induces the production of IL8 and monocyte chemotactic protein 1/CCL2, two chemokines that attract neutrophils and monocytes respectively to sites of infection. Unlike most cytokines, which are secreted in soluble form, IL15 is expressed in association with its high affinity IL15RA on the surface of IL15-producing cells and delivers signals to target cells that express IL2RB and IL2RG receptor subunits. Binding to its receptor triggers the phosphorylation of JAK1 and JAK3 and the recruitment and subsequent phosphorylation of signal transducer and activator of transcription-3/STAT3 and STAT5. In mast cells, induces the rapid tyrosine phosphorylation of STAT6 and thereby controls mast cell survival and release of cytokines such as IL4. The chain is Interleukin-15 (IL15) from Oryctolagus cuniculus (Rabbit).